Reading from the N-terminus, the 1671-residue chain is AF4/FMR2 family member lilli (1671 aa).

Disordered stretches follow at residues 53 to 79, 126 to 304, 393 to 599, 723 to 761, 774 to 1162, and 1185 to 1311; these read YSQN…QQGI, SAPG…EKDV, LAGE…SNKW, DSGT…QLPG, PTQS…TTPH, and KLTP…LQIG. Residues 70-79 are compositionally biased toward basic and acidic residues; sequence REKIERQQGI. 2 stretches are compositionally biased toward low complexity: residues 145–179 and 210–242; these read SLGH…QQQQ and PSSS…SSGG. Phosphothreonine is present on Thr-416. Basic and acidic residues predominate over residues 424 to 437; sequence LKTEKNHSLEKQDS. The segment covering 439 to 450 has biased composition (acidic residues); it reads LENDLELSESED. 2 positions are modified to phosphoserine: Ser-446 and Ser-448. A compositionally biased stretch (low complexity) spans 459–479; it reads SAGNSSNSSESDSSESGSESS. Positions 487-496 are enriched in basic residues; that stretch reads HPNHQQHHHQ. Low complexity-rich tracts occupy residues 497-522 and 561-587; these read LQQQ…PQPL and PAGV…GSSS. Positions 588–599 are enriched in polar residues; it reads NKTPSPTESNKW. The segment covering 723–755 has biased composition (low complexity); that stretch reads DSGTSASGSSSSSSSSSDSAVGGEVVPMPGPGE. The span at 774 to 786 shows a compositional bias: polar residues; the sequence is PTQSQKAPPSNSV. Over residues 800-810 the composition is skewed to basic residues; it reads QRQKKPRKKKA. A phosphoserine mark is found at Ser-819 and Ser-820. Residues 849 to 861 constitute a DNA-binding region (a.T hook); the sequence is KKGRGRPRKQQQS. Residues 858–896 are compositionally biased toward low complexity; sequence QQQSGGSGNLSSASAGSSSQTKGPTLTAAKKPLAKTPLA. A phosphoserine mark is found at Ser-869 and Ser-871. The span at 907–917 shows a compositional bias: polar residues; the sequence is SQSSSNGNTPT. 2 stretches are compositionally biased toward low complexity: residues 947 to 963 and 988 to 1002; these read SSSA…SSSS and ALLG…SSGS. Polar residues predominate over residues 1009–1020; it reads SRSQVGSGQALA. The segment covering 1032 to 1058 has biased composition (low complexity); sequence SQHSQHLSSSECSSSSGGCTAVCSSSS. Residues 1063 to 1080 are compositionally biased toward basic and acidic residues; the sequence is EGRREKERERKPKSDKNK. Residues 1120-1130 are compositionally biased toward pro residues; the sequence is QPPPPHAPPAA. Residues 1188 to 1203 show a composition bias toward polar residues; sequence PAQQNGHLTPKDQATN. 2 stretches are compositionally biased toward basic and acidic residues: residues 1224–1241 and 1250–1280; these read EHPV…EAKF and FQLK…EQPP. Ser-1360 is subject to Phosphoserine. Thr-1362 is subject to Phosphothreonine. Residues 1562–1581 show a composition bias toward low complexity; the sequence is NTPSSISPSNSVGSQGSGSN. Positions 1562–1586 are disordered; it reads NTPSSISPSNSVGSQGSGSNTPPGR.

Belongs to the AF4 family.

The protein localises to the nucleus. Its function is as follows. Has a role in transcriptional regulation. Acts in parallel with the Ras/MAPK and the PI3K/PKB pathways in the control of cell identity and cellular growth. Essential for regulation of the cytoskeleton and cell growth but not for cell proliferation or growth rate. Required specifically for the microtubule-based basal transport of lipid droplets. Plays a partially redundant function downstream of Raf in cell fate specification in the developing eye. Pair-rule protein that regulates embryonic cellularization, gastrulation and segmentation. This Drosophila yakuba (Fruit fly) protein is AF4/FMR2 family member lilli.